The chain runs to 251 residues: Carbohydrate deacetylase (251 aa).

Residues histidine 59 and histidine 122 each coordinate Mg(2+).

Belongs to the YdjC deacetylase family. Homodimer. Mg(2+) serves as cofactor.

In terms of biological role, probably catalyzes the deacetylation of acetylated carbohydrates an important step in the degradation of oligosaccharides. This chain is Carbohydrate deacetylase, found in Vibrio parahaemolyticus serotype O3:K6 (strain RIMD 2210633).